Reading from the N-terminus, the 283-residue chain is Formamidopyrimidine-DNA glycosylase (283 aa).

Residue P2 is the Schiff-base intermediate with DNA of the active site. E3 serves as the catalytic Proton donor. Residue K60 is the Proton donor; for beta-elimination activity of the active site. Residues H100, R119, and R164 each contribute to the DNA site. An FPG-type zinc finger spans residues 249-283; the sequence is WVYNRAGEPCKVCGDVIQRIKLGGRSSHFCRQCQV. Catalysis depends on R273, which acts as the Proton donor; for delta-elimination activity.

The protein belongs to the FPG family. As to quaternary structure, monomer. The cofactor is Zn(2+).

The enzyme catalyses Hydrolysis of DNA containing ring-opened 7-methylguanine residues, releasing 2,6-diamino-4-hydroxy-5-(N-methyl)formamidopyrimidine.. It catalyses the reaction 2'-deoxyribonucleotide-(2'-deoxyribose 5'-phosphate)-2'-deoxyribonucleotide-DNA = a 3'-end 2'-deoxyribonucleotide-(2,3-dehydro-2,3-deoxyribose 5'-phosphate)-DNA + a 5'-end 5'-phospho-2'-deoxyribonucleoside-DNA + H(+). Involved in base excision repair of DNA damaged by oxidation or by mutagenic agents. Acts as a DNA glycosylase that recognizes and removes damaged bases. Has a preference for oxidized purines, such as 7,8-dihydro-8-oxoguanine (8-oxoG). Has AP (apurinic/apyrimidinic) lyase activity and introduces nicks in the DNA strand. Cleaves the DNA backbone by beta-delta elimination to generate a single-strand break at the site of the removed base with both 3'- and 5'-phosphates. The protein is Formamidopyrimidine-DNA glycosylase of Nostoc sp. (strain PCC 7120 / SAG 25.82 / UTEX 2576).